The following is a 199-amino-acid chain: Recombination protein RecR (199 aa).

The C4-type zinc-finger motif lies at 58 to 73 (CKTCGNIDTQSPCTVC). The Toprim domain maps to 81–176 (AMIVVVADVA…KVTRLAHGVP (96 aa)).

This sequence belongs to the RecR family.

Functionally, may play a role in DNA repair. It seems to be involved in an RecBC-independent recombinational process of DNA repair. It may act with RecF and RecO. This chain is Recombination protein RecR, found in Bradyrhizobium sp. (strain BTAi1 / ATCC BAA-1182).